Here is a 394-residue protein sequence, read N- to C-terminus: Mannosyl-3-phosphoglycerate synthase (394 aa).

It belongs to the glycosyltransferase 2 family.

It is found in the cytoplasm. It catalyses the reaction (2R)-3-phosphoglycerate + GDP-alpha-D-mannose = 2-O-(alpha-D-mannosyl)-3-phosphoglycerate + GDP + H(+). Its pathway is carbohydrate biosynthesis; 2-(alpha-D-mannosyl)-D-glycerate biosynthesis; 2-(alpha-D-mannosyl)-D-glycerate from GDP-alpha-D-mannose (MPG route): step 1/2. Functionally, transfers a mannosyl group from GDP-mannose to phosphoglycerate to form mannosyl-3-phosphoglycerate (MPG). In Pyrococcus abyssi (strain GE5 / Orsay), this protein is Mannosyl-3-phosphoglycerate synthase (mngA).